The primary structure comprises 63 residues: Ct-IT2 (63 aa).

The region spanning 1 to 63 (KDGYPMDSKG…VWDKATNKCG (63 aa)) is the LCN-type CS-alpha/beta domain. 4 cysteine pairs are disulfide-bonded: Cys-11–Cys-62, Cys-15–Cys-36, Cys-22–Cys-43, and Cys-26–Cys-45. Gly-63 bears the Glycine amide mark.

Expressed by the venom gland.

Its subcellular location is the secreted. Functionally, beta toxins bind voltage-independently at site-4 of sodium channels (Nav) and shift the voltage of activation toward more negative potentials thereby affecting sodium channel activation and promoting spontaneous and repetitive firing. Is highly active on insects, since it provokes paralysis and death when injected into crickets. This Centruroides tecomanus (Scorpion) protein is Ct-IT2.